The chain runs to 489 residues: Protein LMBR1L (489 aa).

At 1-21 the chain is on the extracellular side; the sequence is MEAADYEVLSVREQLFHDRVR. An interaction with LGB region spans residues 1–59; it reads MEAADYEVLSVREQLFHDRVRECIISILLFATLYILCHIFLTRFKKPAEFTTVDDEDAT. Residues 1 to 76 form an LCN1-binding region; it reads MEAADYEVLS…LCTFTLAVAL (76 aa). Residues 22–42 form a helical membrane-spanning segment; sequence ECIISILLFATLYILCHIFLT. The Cytoplasmic segment spans residues 43-66; that stretch reads RFKKPAEFTTVDDEDATVNKIALE. The chain crosses the membrane as a helical span at residues 67–87; sequence LCTFTLAVALGAVLLLPFSII. Residues 88–114 are Extracellular-facing; that stretch reads SNEVLLSLPRNYYIQWLNGSLIHGLWN. The chain crosses the membrane as a helical span at residues 115–135; it reads LVFLFSNLSLVFLMPFAYFFT. Residues 136 to 154 are Cytoplasmic-facing; the sequence is ESEGFAGSRKGVLGRVYET. A helical transmembrane segment spans residues 155 to 175; it reads VVMLILLTLLVLGMVWVASAI. The Extracellular segment spans residues 176–196; sequence VDNDKASRESLYDFWEYYLPY. Residues 197 to 217 form a helical membrane-spanning segment; that stretch reads LYSCISFLGVLLLLVCTPLGL. Residues 218–305 are Cytoplasmic-facing; sequence ARMFSVTGKL…NLGYPLAMLC (88 aa). A helical membrane pass occupies residues 306–326; that stretch reads LLVLTGLSVLIVAVHILELLI. Topologically, residues 327–350 are extracellular; it reads DEAAMPRGMQDAALGQASFSKLGS. A helical membrane pass occupies residues 351-371; sequence FGAIIQVVLIFYLMVSSVVGF. At 372 to 388 the chain is on the cytoplasmic side; it reads YSSPLFGSLRPRWHDTS. A helical transmembrane segment spans residues 389–409; the sequence is MTQIIGNCVCLLVLSSALPVF. The Extracellular portion of the chain corresponds to 410-431; the sequence is SRTLGLTRFDLLGDFGRFNWLG. The chain crosses the membrane as a helical span at residues 432 to 452; that stretch reads NFYIVFLYNAAFAGLTTLCLV. At 453 to 489 the chain is on the cytoplasmic side; it reads KTFTAAVRAELIRAFGLDRLPLPVSGFPRASRKKQHQ.

This sequence belongs to the LIMR family. Dimer. Can also form higher oligomers. Interacts with LCN1; this interaction mediates the endocytosis of LCN1. Interacts with UBAC2, FAF2, VCP, AMFR, ZNRF3, CTNNB1, LRP6, GSK3B, FZD6, DVL2 and RNF43. Interacts with GSK3A. Interaction with LGB and SCGB1A1 is controversial. In terms of tissue distribution, highly expressed in the bone marrow, thymus, spleen and lymphocytes.

It localises to the cell membrane. It is found in the endoplasmic reticulum membrane. Functionally, plays an essential role in lymphocyte development by negatively regulating the canonical Wnt signaling pathway. In association with UBAC2 and E3 ubiquitin-protein ligase AMFR, promotes the ubiquitin-mediated degradation of CTNNB1 and Wnt receptors FZD6 and LRP6. LMBR1L stabilizes the beta-catenin destruction complex that is required for regulating CTNNB1 levels. Acts as a LCN1 receptor and can mediate its endocytosis. This is Protein LMBR1L (Lmbr1l) from Mus musculus (Mouse).